The chain runs to 198 residues: ATP-dependent Clp protease proteolytic subunit (198 aa).

Catalysis depends on S98, which acts as the Nucleophile. Residue H123 is part of the active site.

Belongs to the peptidase S14 family. Fourteen ClpP subunits assemble into 2 heptameric rings which stack back to back to give a disk-like structure with a central cavity, resembling the structure of eukaryotic proteasomes.

Its subcellular location is the cytoplasm. It catalyses the reaction Hydrolysis of proteins to small peptides in the presence of ATP and magnesium. alpha-casein is the usual test substrate. In the absence of ATP, only oligopeptides shorter than five residues are hydrolyzed (such as succinyl-Leu-Tyr-|-NHMec, and Leu-Tyr-Leu-|-Tyr-Trp, in which cleavage of the -Tyr-|-Leu- and -Tyr-|-Trp bonds also occurs).. Cleaves peptides in various proteins in a process that requires ATP hydrolysis. Has a chymotrypsin-like activity. Plays a major role in the degradation of misfolded proteins. In Listeria innocua serovar 6a (strain ATCC BAA-680 / CLIP 11262), this protein is ATP-dependent Clp protease proteolytic subunit.